The primary structure comprises 427 residues: Histidine--tRNA ligase (427 aa).

This sequence belongs to the class-II aminoacyl-tRNA synthetase family. In terms of assembly, homodimer.

It is found in the cytoplasm. It carries out the reaction tRNA(His) + L-histidine + ATP = L-histidyl-tRNA(His) + AMP + diphosphate + H(+). The sequence is that of Histidine--tRNA ligase from Mannheimia succiniciproducens (strain KCTC 0769BP / MBEL55E).